The chain runs to 623 residues: Glutathione import ATP-binding protein GsiA (623 aa).

2 consecutive ABC transporter domains span residues 15–269 (VENL…RALL) and 314–564 (LRVR…RKLL). ATP contacts are provided by residues 49–56 (GESGSGKS) and 357–364 (GESGSGKS).

It belongs to the ABC transporter superfamily. Glutathione importer (TC 3.A.1.5.11) family. The complex is composed of two ATP-binding proteins (GsiA), two transmembrane proteins (GsiC and GsiD) and a solute-binding protein (GsiB).

The protein localises to the cell inner membrane. It carries out the reaction glutathione(out) + ATP + H2O = glutathione(in) + ADP + phosphate + H(+). In terms of biological role, part of the ABC transporter complex GsiABCD involved in glutathione import. Responsible for energy coupling to the transport system. The protein is Glutathione import ATP-binding protein GsiA of Shigella flexneri.